Consider the following 488-residue polypeptide: Glutamyl-tRNA(Gln) amidotransferase subunit A (488 aa).

Residues Lys-77 and Ser-152 each act as charge relay system in the active site. The active-site Acyl-ester intermediate is the Ser-176.

This sequence belongs to the amidase family. GatA subfamily. In terms of assembly, heterotrimer of A, B and C subunits.

It catalyses the reaction L-glutamyl-tRNA(Gln) + L-glutamine + ATP + H2O = L-glutaminyl-tRNA(Gln) + L-glutamate + ADP + phosphate + H(+). Allows the formation of correctly charged Gln-tRNA(Gln) through the transamidation of misacylated Glu-tRNA(Gln) in organisms which lack glutaminyl-tRNA synthetase. The reaction takes place in the presence of glutamine and ATP through an activated gamma-phospho-Glu-tRNA(Gln). This chain is Glutamyl-tRNA(Gln) amidotransferase subunit A, found in Streptococcus sanguinis (strain SK36).